A 55-amino-acid chain; its full sequence is ATP synthase F(0) complex subunit 8 (55 aa).

A helical membrane pass occupies residues 10 to 32 (FFIMLASWLTFSLIIQPKLLTFV).

The protein belongs to the ATPase protein 8 family. As to quaternary structure, component of the ATP synthase complex composed at least of ATP5F1A/subunit alpha, ATP5F1B/subunit beta, ATP5MC1/subunit c (homooctomer), MT-ATP6/subunit a, MT-ATP8/subunit 8, ATP5ME/subunit e, ATP5MF/subunit f, ATP5MG/subunit g, ATP5MK/subunit k, ATP5MJ/subunit j, ATP5F1C/subunit gamma, ATP5F1D/subunit delta, ATP5F1E/subunit epsilon, ATP5PF/subunit F6, ATP5PB/subunit b, ATP5PD/subunit d, ATP5PO/subunit OSCP. ATP synthase complex consists of a soluble F(1) head domain (subunits alpha(3) and beta(3)) - the catalytic core - and a membrane F(0) domain - the membrane proton channel (subunits c, a, 8, e, f, g, k and j). These two domains are linked by a central stalk (subunits gamma, delta, and epsilon) rotating inside the F1 region and a stationary peripheral stalk (subunits F6, b, d, and OSCP).

The protein localises to the mitochondrion membrane. Functionally, subunit 8, of the mitochondrial membrane ATP synthase complex (F(1)F(0) ATP synthase or Complex V) that produces ATP from ADP in the presence of a proton gradient across the membrane which is generated by electron transport complexes of the respiratory chain. ATP synthase complex consist of a soluble F(1) head domain - the catalytic core - and a membrane F(1) domain - the membrane proton channel. These two domains are linked by a central stalk rotating inside the F(1) region and a stationary peripheral stalk. During catalysis, ATP synthesis in the catalytic domain of F(1) is coupled via a rotary mechanism of the central stalk subunits to proton translocation. In vivo, can only synthesize ATP although its ATP hydrolase activity can be activated artificially in vitro. Part of the complex F(0) domain. The chain is ATP synthase F(0) complex subunit 8 from Loxigilla noctis (Lesser Antillean bullfinch).